A 285-amino-acid polypeptide reads, in one-letter code: Probable adenylate kinase 6, chloroplastic (285 aa).

The N-terminal 33 residues, 1-33 (MAAISRAIRACAAAGSRRSMASSAKEVAAAGAR), are a transit peptide targeting the chloroplast. 63–68 (GVGKGT) contributes to the ATP binding site. The interval 83–112 (ATGDLVRDALASPGPFSEQLAEIVNNGKLV) is NMP. AMP-binding positions include T84, R89, 110–112 (KLV), 140–143 (GFPR), and Q147. Residues 176–224 (GRRMCSQCGGNFNVASIDMEGENGGPRMYMPPLLPPPQCESKLITRPDD) are LID. ATP-binding positions include R177 and 186 to 187 (NF). R221 and R232 together coordinate AMP.

It belongs to the adenylate kinase family.

Its subcellular location is the plastid. It localises to the chloroplast. The enzyme catalyses AMP + ATP = 2 ADP. In terms of biological role, catalyzes the reversible transfer of the terminal phosphate group between ATP and AMP. Plays an important role in cellular energy homeostasis and in adenine nucleotide metabolism. The chain is Probable adenylate kinase 6, chloroplastic from Oryza sativa subsp. japonica (Rice).